The chain runs to 242 residues: tRNA (guanine-N(1)-)-methyltransferase (242 aa).

S-adenosyl-L-methionine contacts are provided by residues Gly-112 and 131 to 136 (LGDFIL).

Belongs to the RNA methyltransferase TrmD family. In terms of assembly, homodimer.

It is found in the cytoplasm. It carries out the reaction guanosine(37) in tRNA + S-adenosyl-L-methionine = N(1)-methylguanosine(37) in tRNA + S-adenosyl-L-homocysteine + H(+). In terms of biological role, specifically methylates guanosine-37 in various tRNAs. The protein is tRNA (guanine-N(1)-)-methyltransferase of Crocosphaera subtropica (strain ATCC 51142 / BH68) (Cyanothece sp. (strain ATCC 51142)).